The primary structure comprises 425 residues: Putative chloroquine resistance transporter (425 aa).

The Cytoplasmic portion of the chain corresponds to 1–56 (MTGIKKGKNKKKNMKNDDRYKELDSLITNGSEIGNNSGRSCVKRFFKIIGNEMKNN). A helical membrane pass occupies residues 57–77 (VYVYLLSILYLCVCVMNKVFA). The Vacuolar portion of the chain corresponds to 78–88 (KRTLNKMGNYS). N86 carries an N-linked (GlcNAc...) asparagine glycan. The chain crosses the membrane as a helical span at residues 89-109 (FVTSETHNIICIIVFQLLYFI). Over 110–126 (YRKTSSSSVYKNESQKN) the chain is Cytoplasmic. A helical transmembrane segment spans residues 127–147 (FGWQFFLISLLDASTVIISMI). Topologically, residues 148–157 (GLTRTTGNIQ) are vacuolar. Residues 158-178 (SFIMQLIIPVNMYFWFMFLGY) form a helical membrane-spanning segment. Over 179–181 (RYH) the chain is Cytoplasmic. Residues 182-202 (LFNYLGAFIILITIAVVETFL) form a helical membrane-spanning segment. Residues 203–210 (SFETQGEN) are Vacuolar-facing. A helical transmembrane segment spans residues 211–231 (SIIFNLIMISAFNTLSFSNMT). Residues 232-249 (REVVFKKHKINILRLNAM) lie on the Cytoplasmic side of the membrane. A helical transmembrane segment spans residues 250 to 270 (VVLFQFFTSLLVLPVYNIPFL). The Vacuolar portion of the chain corresponds to 271–318 (KEIYMPFSEMSTNINNGLRCLFYGENTIVENCGVGMVKMCDNCEGAWK). Disulfide bonds link C290–C313 and C302–C310. A helical membrane pass occupies residues 319-339 (TFITFSFFNICDNLLACYIID). Residues 340 to 347 (KFSTMTYT) are Cytoplasmic-facing. The helical transmembrane segment at 348–368 (IVSCIQGPAITIAYYFKFLAG) threads the bilayer. Topologically, residues 369–378 (DAVRKPRILD) are vacuolar. Residues 379-399 (FLTLFGYLFGTIIYRIGNIIL) form a helical membrane-spanning segment. Over 400–425 (EKKQVIKSQNSNDSEAELTSIETSRA) the chain is Cytoplasmic.

Belongs to the CRT-like transporter family.

It is found in the vacuole membrane. Its function is as follows. Nutrient transporter. Involved in maintaining the osmotic homeostasis of the digestive vacuole. The sequence is that of Putative chloroquine resistance transporter from Plasmodium berghei.